A 359-amino-acid chain; its full sequence is Fructose-like permease IIC component 2 (359 aa).

Residues threonine 11 to serine 344 enclose the PTS EIIC type-2 domain. The next 9 membrane-spanning stretches (helical) occupy residues valine 19–leucine 39, isoleucine 60–isoleucine 80, phenylalanine 99–tyrosine 119, isoleucine 135–glycine 155, serine 176–valine 196, valine 216–isoleucine 236, alanine 251–aspartate 271, alanine 290–valine 310, and leucine 314–leucine 334.

It localises to the cell inner membrane. The phosphoenolpyruvate-dependent sugar phosphotransferase system (PTS), a major carbohydrate active -transport system, catalyzes the phosphorylation of incoming sugar substrates concomitant with their translocation across the cell membrane. The sequence is that of Fructose-like permease IIC component 2 (frwC) from Escherichia coli (strain K12).